Here is a 240-residue protein sequence, read N- to C-terminus: Keratinocyte-associated protein 3 (240 aa).

Transmembrane regions (helical) follow at residues 21-41 (VGLA…VLHG), 63-83 (VISV…LLAS), 94-114 (VLLA…LGLL), and 163-183 (ALAL…LSGY).

Belongs to the TMEM54 family. As to expression, expressed in skin, pancreas and keratinocytes.

The protein resides in the membrane. The protein is Keratinocyte-associated protein 3 (KRTCAP3) of Homo sapiens (Human).